An 842-amino-acid chain; its full sequence is Follistatin-related protein 4 (842 aa).

Residues 1–22 (MKPGGFWLHLTLLGASLPAALG) form the signal peptide. In terms of domain architecture, Kazal-like spans 81 to 135 (KTGEPECQCLEACRPSYVPVCGSDGRFYENHCKLHRAACLLGKRITVIHSKDCFL). Cystine bridges form between C87–C119, C93–C112, and C101–C133. In terms of domain architecture, EF-hand spans 174-209 (QKRLLVESLFRDLDADGNGHLSSSELAQHVLKKQDL). Ca(2+) contacts are provided by D187, D189, N191, H193, and E198. Ig-like domains lie at 251 to 338 (PEDR…LQVN) and 341 to 426 (PVIR…EDIS). Cystine bridges form between C270-C321 and C362-C413. An N-linked (GlcNAc...) asparagine glycan is attached at N318.

It localises to the secreted. This is Follistatin-related protein 4 (FSTL4) from Homo sapiens (Human).